We begin with the raw amino-acid sequence, 164 residues long: Large ribosomal subunit protein uL10 (164 aa).

This sequence belongs to the universal ribosomal protein uL10 family. Part of the ribosomal stalk of the 50S ribosomal subunit. The N-terminus interacts with L11 and the large rRNA to form the base of the stalk. The C-terminus forms an elongated spine to which L12 dimers bind in a sequential fashion forming a multimeric L10(L12)X complex.

In terms of biological role, forms part of the ribosomal stalk, playing a central role in the interaction of the ribosome with GTP-bound translation factors. This chain is Large ribosomal subunit protein uL10, found in Chromobacterium violaceum (strain ATCC 12472 / DSM 30191 / JCM 1249 / CCUG 213 / NBRC 12614 / NCIMB 9131 / NCTC 9757 / MK).